The primary structure comprises 267 residues: 5'-nucleotidase SurE (267 aa).

Residues Asp-9, Asp-10, Ser-40, and Asn-97 each contribute to the a divalent metal cation site.

Belongs to the SurE nucleotidase family. The cofactor is a divalent metal cation.

It localises to the cytoplasm. It carries out the reaction a ribonucleoside 5'-phosphate + H2O = a ribonucleoside + phosphate. Nucleotidase that shows phosphatase activity on nucleoside 5'-monophosphates. This Helicobacter pylori (strain J99 / ATCC 700824) (Campylobacter pylori J99) protein is 5'-nucleotidase SurE.